A 186-amino-acid polypeptide reads, in one-letter code: Ribosome-recycling factor (186 aa).

This sequence belongs to the RRF family.

The protein localises to the cytoplasm. Its function is as follows. Responsible for the release of ribosomes from messenger RNA at the termination of protein biosynthesis. May increase the efficiency of translation by recycling ribosomes from one round of translation to another. The sequence is that of Ribosome-recycling factor from Amoebophilus asiaticus (strain 5a2).